Reading from the N-terminus, the 215-residue chain is Cytochrome b6 (215 aa).

The chain crosses the membrane as a helical span at residues 32-52 (IFYCLGGVTLVCFIIQFATGF). Cysteine 35 contacts heme c. Heme b contacts are provided by histidine 86 and histidine 100. 3 consecutive transmembrane segments (helical) span residues 90 to 110 (ASMM…TGGF), 116 to 136 (LTWI…VTGY), and 186 to 206 (LHTF…FLMI). Positions 187 and 202 each coordinate heme b.

Belongs to the cytochrome b family. PetB subfamily. In terms of assembly, the 4 large subunits of the cytochrome b6-f complex are cytochrome b6, subunit IV (17 kDa polypeptide, PetD), cytochrome f and the Rieske protein, while the 4 small subunits are PetG, PetL, PetM and PetN. The complex functions as a dimer. Requires heme b as cofactor. Heme c serves as cofactor.

It is found in the cellular thylakoid membrane. Its function is as follows. Component of the cytochrome b6-f complex, which mediates electron transfer between photosystem II (PSII) and photosystem I (PSI), cyclic electron flow around PSI, and state transitions. The chain is Cytochrome b6 from Acaryochloris marina (strain MBIC 11017).